Consider the following 628-residue polypeptide: 1-deoxy-D-xylulose-5-phosphate synthase (628 aa).

Thiamine diphosphate-binding positions include H72 and 113 to 115 (GHS). Mg(2+) is bound at residue D144. Thiamine diphosphate contacts are provided by residues 145–146 (GA), N173, Y284, and E363. N173 contacts Mg(2+).

Belongs to the transketolase family. DXPS subfamily. As to quaternary structure, homodimer. Mg(2+) serves as cofactor. The cofactor is thiamine diphosphate.

The enzyme catalyses D-glyceraldehyde 3-phosphate + pyruvate + H(+) = 1-deoxy-D-xylulose 5-phosphate + CO2. The protein operates within metabolic intermediate biosynthesis; 1-deoxy-D-xylulose 5-phosphate biosynthesis; 1-deoxy-D-xylulose 5-phosphate from D-glyceraldehyde 3-phosphate and pyruvate: step 1/1. Its function is as follows. Catalyzes the acyloin condensation reaction between C atoms 2 and 3 of pyruvate and glyceraldehyde 3-phosphate to yield 1-deoxy-D-xylulose-5-phosphate (DXP). The polypeptide is 1-deoxy-D-xylulose-5-phosphate synthase (Brevibacillus brevis (strain 47 / JCM 6285 / NBRC 100599)).